The sequence spans 486 residues: Keratin, type II cuticular Hb6 (486 aa).

Positions 1–106 are head; that stretch reads MTCGSYCGGR…PNAQCVKHEE (106 aa). The region spanning 106–417 is the IF rod domain; sequence EKEQIKCLNS…RLLEGEEQRL (312 aa). The coil 1A stretch occupies residues 107–141; it reads KEQIKCLNSKFAAFIDKVRFLEQQNKLLETKWQFY. Positions 142-151 are linker 1; it reads QNRKCCESNM. A coil 1B region spans residues 152–252; the sequence is EPLFEGYIEA…YDEETRILHS (101 aa). Lysine 212 participates in a covalent cross-link: Glycyl lysine isopeptide (Lys-Gly) (interchain with G-Cter in SUMO1). Positions 253 to 269 are linker 12; the sequence is HISDTSIVVKMDNSRDL. The coil 2 stretch occupies residues 270 to 413; it reads NMDCVVAEIK…TTYRRLLEGE (144 aa). The segment at 414-486 is tail; it reads EQRLCEGVGS…GACSGGCKKC (73 aa).

It belongs to the intermediate filament family. As to quaternary structure, heterotetramer of two type I and two type II keratins.

This chain is Keratin, type II cuticular Hb6 (Krt86), found in Mus musculus (Mouse).